Reading from the N-terminus, the 389-residue chain is Acetate kinase (389 aa).

Asn9 is a Mg(2+) binding site. Position 16 (Lys16) interacts with ATP. Residue Arg77 participates in substrate binding. Asp134 serves as the catalytic Proton donor/acceptor. Residues His194 to Gly198, Asp268 to Arg270, and Gly316 to Asn320 contribute to the ATP site. Mg(2+) is bound at residue Glu370.

The protein belongs to the acetokinase family. As to quaternary structure, homodimer. Mg(2+) is required as a cofactor. It depends on Mn(2+) as a cofactor.

Its subcellular location is the cytoplasm. The catalysed reaction is acetate + ATP = acetyl phosphate + ADP. It participates in metabolic intermediate biosynthesis; acetyl-CoA biosynthesis; acetyl-CoA from acetate: step 1/2. Catalyzes the formation of acetyl phosphate from acetate and ATP. Can also catalyze the reverse reaction. This chain is Acetate kinase, found in Mycolicibacterium vanbaalenii (strain DSM 7251 / JCM 13017 / BCRC 16820 / KCTC 9966 / NRRL B-24157 / PYR-1) (Mycobacterium vanbaalenii).